The sequence spans 734 residues: Photosystem I P700 chlorophyll a apoprotein A2 (734 aa).

Transmembrane regions (helical) follow at residues 46–69 (IFAS…FHVA), 135–158 (LYAG…LHLQ), 175–199 (LNHH…HVAI), 273–291 (MAHH…GHMY), 330–353 (LHFQ…QHMY), 369–395 (AALY…IFLI), 417–439 (AIIS…LYVH), and 517–535 (FLVH…LILV). Residues cysteine 559 and cysteine 568 each contribute to the [4Fe-4S] cluster site. The next 2 membrane-spanning stretches (helical) occupy residues 575 to 596 (AFYL…YWHW) and 643 to 665 (LSVW…MFLI). The chlorophyll a site is built by histidine 654, methionine 662, and tyrosine 670. Residue tryptophan 671 coordinates phylloquinone. The chain crosses the membrane as a helical span at residues 707–727 (LVGLAHFSVGYIFTYAAFLIA).

Belongs to the PsaA/PsaB family. As to quaternary structure, the PsaA/B heterodimer binds the P700 chlorophyll special pair and subsequent electron acceptors. PSI consists of a core antenna complex that captures photons, and an electron transfer chain that converts photonic excitation into a charge separation. The eukaryotic PSI reaction center is composed of at least 11 subunits. P700 is a chlorophyll a/chlorophyll a' dimer, A0 is one or more chlorophyll a, A1 is one or both phylloquinones and FX is a shared 4Fe-4S iron-sulfur center. is required as a cofactor.

It is found in the plastid. The protein localises to the chloroplast thylakoid membrane. It carries out the reaction reduced [plastocyanin] + hnu + oxidized [2Fe-2S]-[ferredoxin] = oxidized [plastocyanin] + reduced [2Fe-2S]-[ferredoxin]. Functionally, psaA and PsaB bind P700, the primary electron donor of photosystem I (PSI), as well as the electron acceptors A0, A1 and FX. PSI is a plastocyanin-ferredoxin oxidoreductase, converting photonic excitation into a charge separation, which transfers an electron from the donor P700 chlorophyll pair to the spectroscopically characterized acceptors A0, A1, FX, FA and FB in turn. Oxidized P700 is reduced on the lumenal side of the thylakoid membrane by plastocyanin. The polypeptide is Photosystem I P700 chlorophyll a apoprotein A2 (Pinus koraiensis (Korean pine)).